The following is a 335-amino-acid chain: Prepilin leader peptidase/N-methyltransferase (335 aa).

A helical membrane pass occupies residues leucine 13 to isoleucine 33. 4 residues coordinate Zn(2+): cysteine 49, cysteine 52, cysteine 74, and cysteine 77. 5 helical membrane-spanning segments follow: residues tryptophan 105–isoleucine 125, isoleucine 131–leucine 151, leucine 206–leucine 226, proline 258–isoleucine 278, and isoleucine 299–leucine 319.

This sequence belongs to the peptidase A24 family. Zn(2+) serves as cofactor.

It localises to the cell inner membrane. It catalyses the reaction Typically cleaves a -Gly-|-Phe- bond to release an N-terminal, basic peptide of 5-8 residues from type IV prepilin, and then N-methylates the new N-terminal amino group, the methyl donor being S-adenosyl-L-methionine.. Plays an essential role in type IV pili and type II pseudopili formation by proteolytically removing the leader sequence from substrate proteins and subsequently monomethylating the alpha-amino group of the newly exposed N-terminal phenylalanine. The polypeptide is Prepilin leader peptidase/N-methyltransferase (pilD) (Myxococcus xanthus (strain DK1622)).